The primary structure comprises 296 residues: Putative mannose 6-phosphate receptor-like protein C530.09c (296 aa).

The signal sequence occupies residues 1-25; it reads MRLLTCLINVLAGLTLFSQFQRAFG. Over 26–206 the chain is Lumenal; the sequence is LTITRRGFKV…TVKKDSTLNP (181 aa). Residues 42–197 form the MRH domain; sequence PFCALHHPNT…EWKTIHACPT (156 aa). Cysteine 44 and cysteine 87 are disulfide-bonded. Residues asparagine 64, asparagine 81, asparagine 93, asparagine 96, and asparagine 143 are each glycosylated (N-linked (GlcNAc...) asparagine). Intrachain disulfides connect cysteine 147-cysteine 183 and cysteine 163-cysteine 195. A helical transmembrane segment spans residues 207–227; that stretch reads VSVFLLFCAIAFLAYFVGGFV. The Cytoplasmic segment spans residues 228–249; it reads YQRVVLNARGLRQIPNYEMWRS. The chain crosses the membrane as a helical span at residues 250-270; it reads LFGFISDIVIILYSSILSILP. The Lumenal segment spans residues 271 to 296; the sequence is SSITRMRGNRRNIDYVEDALIDDIDT.

The protein belongs to the MRL1/IGF2R family.

It is found in the golgi apparatus. The protein resides in the trans-Golgi network membrane. The protein localises to the endosome membrane. The polypeptide is Putative mannose 6-phosphate receptor-like protein C530.09c (Schizosaccharomyces pombe (strain 972 / ATCC 24843) (Fission yeast)).